A 251-amino-acid polypeptide reads, in one-letter code: Flagellar basal-body rod protein FlgF (251 aa).

The protein belongs to the flagella basal body rod proteins family. As to quaternary structure, the basal body constitutes a major portion of the flagellar organelle and consists of five rings (E,L,P,S, and M) mounted on a central rod. The rod consists of about 26 subunits of FlgG in the distal portion, and FlgB, FlgC and FlgF are thought to build up the proximal portion of the rod with about 6 subunits each.

The protein localises to the bacterial flagellum basal body. The sequence is that of Flagellar basal-body rod protein FlgF (flgF) from Escherichia coli (strain K12).